The chain runs to 429 residues: D-amino acid dehydrogenase (429 aa).

FAD is bound at residue 3–17 (VLILGSGVIGTTTAW).

It belongs to the DadA oxidoreductase family. Requires FAD as cofactor.

It carries out the reaction a D-alpha-amino acid + A + H2O = a 2-oxocarboxylate + AH2 + NH4(+). It functions in the pathway amino-acid degradation; D-alanine degradation; NH(3) and pyruvate from D-alanine: step 1/1. Oxidative deamination of D-amino acids. This chain is D-amino acid dehydrogenase, found in Xanthomonas campestris pv. campestris (strain 8004).